The sequence spans 395 residues: Enolase (395 aa).

Positions 136 and 145 each coordinate substrate. Glu188 acts as the Proton donor in catalysis. Positions 223, 271, and 296 each coordinate Mg(2+). Glu271 and Asp296 together coordinate substrate. The active-site Proton acceptor is Lys321. Substrate-binding positions include 348–351 and Lys372; that span reads SHRS.

This sequence belongs to the enolase family. As to quaternary structure, homodimer. It depends on Mg(2+) as a cofactor.

It is found in the cytoplasm. The enzyme catalyses (2R)-2-phosphoglycerate = phosphoenolpyruvate + H2O. The protein operates within carbohydrate degradation; glycolysis; pyruvate from D-glyceraldehyde 3-phosphate: step 4/5. The chain is Enolase from Alligator mississippiensis (American alligator).